The chain runs to 425 residues: Glutamate-1-semialdehyde 2,1-aminomutase (425 aa).

Position 265 is an N6-(pyridoxal phosphate)lysine (Lys-265).

It belongs to the class-III pyridoxal-phosphate-dependent aminotransferase family. HemL subfamily. As to quaternary structure, homodimer. Pyridoxal 5'-phosphate is required as a cofactor.

The protein resides in the cytoplasm. The enzyme catalyses (S)-4-amino-5-oxopentanoate = 5-aminolevulinate. Its pathway is porphyrin-containing compound metabolism; protoporphyrin-IX biosynthesis; 5-aminolevulinate from L-glutamyl-tRNA(Glu): step 2/2. The sequence is that of Glutamate-1-semialdehyde 2,1-aminomutase from Desulfatibacillum aliphaticivorans.